A 425-amino-acid polypeptide reads, in one-letter code: Beta-1,4-galactosyltransferase galt-1 (425 aa).

The Cytoplasmic segment spans residues 1 to 8 (MPRITASK). The helical; Signal-anchor for type II membrane protein transmembrane segment at 9–29 (IVLLIALSFCITVIYHFPIAT) threads the bilayer. The Lumenal portion of the chain corresponds to 30-425 (RSSKEYDEYG…FDSVVGLLDL (396 aa)). N-linked (GlcNAc...) asparagine glycans are attached at residues Asn-109 and Asn-152. Positions 189–394 (KMSICVPALF…LLRVYHYKDK (206 aa)) constitute a GT92 domain.

It belongs to the glycosyltransferase 92 family. Mn(2+) serves as cofactor. Post-translationally, N-glycosylated. As to expression, expressed in intestine and coelomocytes.

The protein localises to the golgi apparatus. It is found in the golgi stack membrane. Its activity is regulated as follows. Inhibited by EDTA, Cu(2+) and Zn(2+). In terms of biological role, catalyzes the transfer of beta-galactose from UDP-galactose to position 4 of alpha-1,6-linked fucose at the reducing end GlcNAc in N-glycan cores. Involved in susceptibility to the nematotoxic C.cinerea galectin Cgl2, likely by contributing to the synthesis of core alpha-1,6-fucosylated N-glycans to which Cgl2 binds. This Caenorhabditis elegans protein is Beta-1,4-galactosyltransferase galt-1.